The chain runs to 880 residues: GATOR2 complex protein MIOS-A (880 aa).

6 WD repeats span residues 60 to 102, 113 to 157, 185 to 224, 226 to 264, 268 to 309, and 399 to 441; these read SDTP…NSKC, KHAR…TPEV, GQNDACLSLCWLPRDQKLLLAGMHRNLAIFDLRNTNQKMF, NTKAVQGVTVDPHFHDRVASFFEGQVAIWDLRKFEKPVL, EQPK…TPIG, and RLRA…KQYA. Residues 740–786 form a C4-type zinc finger; it reads VSCNFCGKSISYSCSSVPHQGRGFSQYGVSGSPTKSKFTSCPGCRKP. Positions 742, 745, 780, 783, 793, 832, 835, 837, 840, 843, 854, 859, and 863 each coordinate Zn(2+). Residues 787–868 form an RING-type; atypical zinc finger; sequence LPRCALCLIN…CSCKCMQLDT (82 aa).

It belongs to the WD repeat mio family. As to quaternary structure, component of the GATOR2 subcomplex, composed of MIOS, SEC13, SEH1L, WDR24 and WDR59. The GATOR2 complex interacts with CASTOR1 and CASTOR2; the interaction is negatively regulated by arginine. The GATOR2 complex interacts with SESN1, SESN2 and SESN3; the interaction is negatively regulated by amino acids. Interacts with SAR1; the interaction is direct, disrupted by leucine and mediates the interaction of SAR1 with the GATOR2 complex to negatively regulate the TORC1 signaling upon leucine deprivation.

The protein localises to the lysosome membrane. The GATOR2 complex is negatively regulated by the upstream amino acid sensors CASTOR1 and SESN2, which sequester the GATOR2 complex in absence of amino acids. In the presence of abundant amino acids, GATOR2 is released from CASTOR1 and SESN2 and activated. Its function is as follows. As a component of the GATOR2 complex, functions as an activator of the amino acid-sensing branch of the mTORC1 signaling pathway. The GATOR2 complex indirectly activates mTORC1 through the inhibition of the GATOR1 subcomplex. GATOR2 probably acts as an E3 ubiquitin-protein ligase toward GATOR1. In the presence of abundant amino acids, the GATOR2 complex mediates ubiquitination of the NPRL2 core component of the GATOR1 complex, leading to GATOR1 inactivation. In the absence of amino acids, GATOR2 is inhibited, activating the GATOR1 complex. Within the GATOR2 complex, MIOS is required to prevent autoubiquitination of WDR24, the catalytic subunit of the complex. In Xenopus laevis (African clawed frog), this protein is GATOR2 complex protein MIOS-A.